A 436-amino-acid polypeptide reads, in one-letter code: Probable glucose-6-phosphate isomerase (436 aa).

Catalysis depends on E272, which acts as the Proton donor. Residues H293 and K404 contribute to the active site.

It belongs to the GPI family.

It localises to the cytoplasm. The enzyme catalyses alpha-D-glucose 6-phosphate = beta-D-fructose 6-phosphate. It participates in carbohydrate biosynthesis; gluconeogenesis. It functions in the pathway carbohydrate degradation; glycolysis; D-glyceraldehyde 3-phosphate and glycerone phosphate from D-glucose: step 2/4. Its function is as follows. Catalyzes the reversible isomerization of glucose-6-phosphate to fructose-6-phosphate. The sequence is that of Probable glucose-6-phosphate isomerase from Haloarcula marismortui (strain ATCC 43049 / DSM 3752 / JCM 8966 / VKM B-1809) (Halobacterium marismortui).